A 122-amino-acid polypeptide reads, in one-letter code: S-protein homolog 23 (122 aa).

The N-terminal stretch at 1–20 (MQNLSILLVCSFCILGHVSS) is a signal peptide. N86 carries an N-linked (GlcNAc...) asparagine glycan.

Belongs to the plant self-incompatibility (S1) protein family.

The protein resides in the secreted. In Arabidopsis thaliana (Mouse-ear cress), this protein is S-protein homolog 23.